Here is a 709-residue protein sequence, read N- to C-terminus: Potassium-transporting ATPase ATP-binding subunit (709 aa).

4 helical membrane passes run 55-75 (VMLV…RDLA), 86-106 (GLVA…EAMA), 236-256 (IALN…VVTL), and 269-289 (VVVL…ALLS). Asp-324 functions as the 4-aspartylphosphate intermediate in the catalytic mechanism. ATP-binding positions include Asp-361, Glu-365, 395 to 402 (FTAETRMS), and Lys-417. Residues Asp-545 and Asp-549 each coordinate Mg(2+). 3 helical membrane passes run 615 to 635 (FAII…LNVM), 643 to 663 (AILS…PLAL), and 688 to 708 (GLVV…ALGV).

Belongs to the cation transport ATPase (P-type) (TC 3.A.3) family. Type IA subfamily. In terms of assembly, the system is composed of three essential subunits: KdpA, KdpB and KdpC.

The protein localises to the cell membrane. It catalyses the reaction K(+)(out) + ATP + H2O = K(+)(in) + ADP + phosphate + H(+). Its function is as follows. Part of the high-affinity ATP-driven potassium transport (or Kdp) system, which catalyzes the hydrolysis of ATP coupled with the electrogenic transport of potassium into the cytoplasm. This subunit is responsible for energy coupling to the transport system and for the release of the potassium ions to the cytoplasm. This chain is Potassium-transporting ATPase ATP-binding subunit, found in Mycobacterium tuberculosis (strain ATCC 25618 / H37Rv).